The sequence spans 418 residues: Sialidase-3 (418 aa).

Positions 24-27 match the FRIP motif motif; the sequence is YRIP. R25 and R45 together coordinate substrate. The Proton acceptor role is filled by D50. The stretch at 129–140 is one BNR 1 repeat; it reads LYSEDSGCSWGE. Substrate is bound by residues Y179 and Y181. Residues 201 to 212 form a BNR 2 repeat; the sequence is FYSDDLGVTWHC. Positions 223 and 243 each coordinate substrate. Residues 252 to 263 form a BNR 3 repeat; it reads AFSTDSGDCFQK. A substrate-binding site is contributed by R339. The Nucleophile role is filled by Y369. The active site involves E386.

It belongs to the glycosyl hydrolase 33 family. In terms of assembly, interacts with CAV1; this interaction enhances NEU3 sialidase activity within caveola. Interacts with EGFR; this interaction mediates desialylation of EGFR enhancing downstream signaling. In terms of processing, palmitoylated; may regulate intracellular trafficking and anchorage to plasma membrane and endomembranes. As to expression, expressed in brain, cardiac muscle and weakly in liver.

The protein resides in the cell membrane. Its subcellular location is the membrane. The protein localises to the caveola. It localises to the early endosome membrane. It is found in the recycling endosome membrane. The protein resides in the lysosome membrane. The catalysed reaction is Hydrolysis of alpha-(2-&gt;3)-, alpha-(2-&gt;6)-, alpha-(2-&gt;8)- glycosidic linkages of terminal sialic acid residues in oligosaccharides, glycoproteins, glycolipids, colominic acid and synthetic substrates.. The enzyme catalyses a ganglioside GD1a + H2O = a ganglioside GM1 + N-acetylneuraminate. It carries out the reaction a ganglioside GD1a (d18:1(4E)) + H2O = a ganglioside GM1 (d18:1(4E)) + N-acetylneuraminate. It catalyses the reaction a ganglioside GD1b + H2O = a ganglioside GM1 + N-acetylneuraminate. The catalysed reaction is a ganglioside GD1b (d18:1(4E)) + H2O = a ganglioside GM1 (d18:1(4E)) + N-acetylneuraminate. The enzyme catalyses a ganglioside GD3 + H2O = a ganglioside GM3 + N-acetylneuraminate. It carries out the reaction a ganglioside GD3 (d18:1(4E)) + H2O = a ganglioside GM3 (d18:1(4E)) + N-acetylneuraminate. It catalyses the reaction a ganglioside GM3 + H2O = a beta-D-galactosyl-(1-&gt;4)-beta-D-glucosyl-(1&lt;-&gt;1)-ceramide + N-acetylneuraminate. The catalysed reaction is a ganglioside GM1 + H2O = a ganglioside GA1 + N-acetylneuraminate. The enzyme catalyses a ganglioside GM1 (d18:1(4E)) + H2O = a ganglioside GA1 (d18:1(4E)) + N-acetylneuraminate. It carries out the reaction a ganglioside GM2 (d18:1(4E)) + H2O = a ganglioside GA2 (d18:1(4E)) + N-acetylneuraminate. It catalyses the reaction a ganglioside GM3 (d18:1(4E)) + H2O = a beta-D-Gal-(1-&gt;4)-beta-D-Glc-(1&lt;-&gt;1)-Cer(d18:1(4E)) + N-acetylneuraminate. The catalysed reaction is a ganglioside GT1b + H2O = a ganglioside GD1b + N-acetylneuraminate. In terms of biological role, exo-alpha-sialidase that catalyzes the hydrolytic cleavage of the terminal sialic acid (N-acetylneuraminic acid, Neu5Ac) of a glycan moiety in the catabolism of glycolipids, glycoproteins and oligosacharides. Displays high catalytic efficiency for gangliosides including alpha-(2-&gt;3)-sialylated GD1a and GM3 and alpha-(2-&gt;8)-sialylated GD3. Plays a role in the regulation of transmembrane signaling through the modulation of ganglioside content of the lipid bilayer and by direct interaction with signaling receptors, such as EGFR. Desialylates EGFR and activates downstream signaling in proliferating cells. Contributes to clathrin-mediated endocytosis by regulating sorting of endocytosed receptors to early and recycling endosomes. The protein is Sialidase-3 (Neu3) of Rattus norvegicus (Rat).